The sequence spans 387 residues: MNVFPKKIMLLGSGELGKEVAIAAKRLGCYVIACDRYNDAPAMQIADQFNVFNMNNGSELKEVIYKCNPDIIIPEIEALAVDVLKEIEQKITVIPNSRATAITMNRDKIRDLASNELNIRTAKFSYAVNQSELDLHAETIGYPLLIKPVMSSSGKGQSLVKNKNDLAQAWNLAIEKSRGKSNKIILEEFIDFDLEITLLTIRQSNGKTLFCAPIGHEQKNGDYQCSWQPAELTESVLEKAQQIAKRVTDNLGGVGLFGVEFFIKGEEVIFSELSPRPHDTGLVTLISQNLNEFELHLRAVLGIPIPEIVCHEASASRVILASMETTDVAFTGLEQALSQSNTNVFMFGKPSSTEGRRMGVAVAKAETIDEARIKADNAAQSVQFINE.

N(1)-(5-phospho-beta-D-ribosyl)glycinamide-binding positions include 15 to 16 and glutamate 75; that span reads EL. Residues arginine 106, lysine 147, 152-157, 187-190, and glutamate 195 contribute to the ATP site; these read SSGKGQ and EEFI. Positions 111–301 constitute an ATP-grasp domain; the sequence is DLASNELNIR…EFELHLRAVL (191 aa). Positions 260 and 272 each coordinate Mg(2+). Residues aspartate 279, lysine 349, and 356–357 contribute to the N(1)-(5-phospho-beta-D-ribosyl)glycinamide site; that span reads RR.

The protein belongs to the PurK/PurT family. As to quaternary structure, homodimer.

It carries out the reaction N(1)-(5-phospho-beta-D-ribosyl)glycinamide + formate + ATP = N(2)-formyl-N(1)-(5-phospho-beta-D-ribosyl)glycinamide + ADP + phosphate + H(+). The protein operates within purine metabolism; IMP biosynthesis via de novo pathway; N(2)-formyl-N(1)-(5-phospho-D-ribosyl)glycinamide from N(1)-(5-phospho-D-ribosyl)glycinamide (formate route): step 1/1. Involved in the de novo purine biosynthesis. Catalyzes the transfer of formate to 5-phospho-ribosyl-glycinamide (GAR), producing 5-phospho-ribosyl-N-formylglycinamide (FGAR). Formate is provided by PurU via hydrolysis of 10-formyl-tetrahydrofolate. The chain is Formate-dependent phosphoribosylglycinamide formyltransferase from Prochlorococcus marinus (strain NATL2A).